A 308-amino-acid chain; its full sequence is Alpha/beta hydrolase domain-containing protein WAV2 (308 aa).

The chain crosses the membrane as a helical span at residues 6–26 (SALFYGFGGIVVAGVALLVAF). Residues Ser159, Asp243, and Arg308 each act as charge relay system in the active site.

This sequence belongs to the serine esterase family. As to expression, expressed in roots, rosette leaves, stems and flowers.

It localises to the cell membrane. In terms of biological role, involved in the regulation of root growth. Involved in the suppression of the root bending in response to touch stimuli, gravity and light. Negatively regulates stimulus-induced root bending through inhibition of root tip rotation. This is Alpha/beta hydrolase domain-containing protein WAV2 from Arabidopsis thaliana (Mouse-ear cress).